A 61-amino-acid chain; its full sequence is Large ribosomal subunit protein bL28 (61 aa).

Residues 1 to 26 (MAKDFLNGKRTHFGNKRSHALNSSRR) form a disordered region. Positions 9–19 (KRTHFGNKRSH) are enriched in basic residues.

Belongs to the bacterial ribosomal protein bL28 family.

The sequence is that of Large ribosomal subunit protein bL28 from Levilactobacillus brevis (strain ATCC 367 / BCRC 12310 / CIP 105137 / JCM 1170 / LMG 11437 / NCIMB 947 / NCTC 947) (Lactobacillus brevis).